The following is a 349-amino-acid chain: Glycosyltransferase 8 domain-containing protein 2 (349 aa).

Over 1 to 6 the chain is Cytoplasmic; it reads MALLRK. The helical; Signal-anchor for type II membrane protein transmembrane segment at 7 to 24 threads the bilayer; sequence INQVLLFLLIVTLCVILY. Topologically, residues 25–349 are lumenal; the sequence is KKVHKGTVPK…AGIFKLNHHS (325 aa). The N-linked (GlcNAc...) asparagine glycan is linked to Asn-234.

The protein belongs to the glycosyltransferase 8 family.

It localises to the membrane. The protein is Glycosyltransferase 8 domain-containing protein 2 (GLT8D2) of Homo sapiens (Human).